Reading from the N-terminus, the 310-residue chain is S-methyl-5'-thioadenosine phosphorylase (310 aa).

Phosphate is bound by residues threonine 20, 62-63, and 95-96; these read RH and SA. Methionine 197 contacts substrate. Serine 198 is a phosphate binding site. Residue 221 to 223 coordinates substrate; it reads DYD.

This sequence belongs to the PNP/MTAP phosphorylase family. MTAP subfamily. Homotrimer.

It is found in the cytoplasm. The protein localises to the nucleus. The catalysed reaction is S-methyl-5'-thioadenosine + phosphate = 5-(methylsulfanyl)-alpha-D-ribose 1-phosphate + adenine. It functions in the pathway amino-acid biosynthesis; L-methionine biosynthesis via salvage pathway; S-methyl-5-thio-alpha-D-ribose 1-phosphate from S-methyl-5'-thioadenosine (phosphorylase route): step 1/1. In terms of biological role, catalyzes the reversible phosphorylation of S-methyl-5'-thioadenosine (MTA) to adenine and 5-methylthioribose-1-phosphate. Involved in the breakdown of MTA, a major by-product of polyamine biosynthesis. Responsible for the first step in the methionine salvage pathway after MTA has been generated from S-adenosylmethionine. Has broad substrate specificity with 6-aminopurine nucleosides as preferred substrates. This chain is S-methyl-5'-thioadenosine phosphorylase, found in Neurospora crassa (strain ATCC 24698 / 74-OR23-1A / CBS 708.71 / DSM 1257 / FGSC 987).